Here is a 464-residue protein sequence, read N- to C-terminus: Protein FAM90A8 (464 aa).

Disordered regions lie at residues 1-42, 69-389, and 415-437; these read MMAR…DPRL, VPAT…HDGA, and HSPE…SEAP. Basic and acidic residues-rich tracts occupy residues 74–89 and 97–114; these read GKKE…KPRG and NKDK…DPQR. Positions 180 to 197 are enriched in low complexity; sequence LASLSPLRKASLSSSSSL.

This sequence belongs to the FAM90 family.

This Homo sapiens (Human) protein is Protein FAM90A8 (FAM90A8).